Reading from the N-terminus, the 117-residue chain is MSKNIHDVAYGLQKAIADHTDFKTLKESYAKVQGDADSKQLFDTFRNMQLEIQQKMMQGQEITEEDNKKAQEVIDLIQQNEHIKKLMEAEQRLNVVIGDINKIIMKPLEELYSAYQA.

This sequence belongs to the UPF0342 family.

The protein is UPF0342 protein Bcer98_0695 of Bacillus cytotoxicus (strain DSM 22905 / CIP 110041 / 391-98 / NVH 391-98).